Reading from the N-terminus, the 402-residue chain is Zinc finger protein 587B (402 aa).

The 77-residue stretch at 15-91 folds into the KRAB domain; the sequence is VTFEDVAVKF…PVTGVSPKKA (77 aa). The C2H2-type 1 zinc-finger motif lies at 92-114; the sequence is HPCEMCGPILGDILHVADHQGTH. A C2H2-type 2; degenerate zinc finger spans residues 120–142; sequence HRCEAWGNKLYDSGNFHQHQNEH. Glycyl lysine isopeptide (Lys-Gly) (interchain with G-Cter in SUMO2) cross-links involve residues Lys-177, Lys-200, and Lys-253. C2H2-type zinc fingers lie at residues 242–264, 270–292, 298–320, 326–348, and 354–383; these read YVCC…QRVH, YECG…QQFH, YGCE…QKVH, YECG…QRIH, and YKCG…WVDH. Residue Lys-366 forms a Glycyl lysine isopeptide (Lys-Gly) (interchain with G-Cter in SUMO2) linkage.

This sequence belongs to the krueppel C2H2-type zinc-finger protein family.

It is found in the nucleus. Its function is as follows. May be involved in transcriptional regulation. The chain is Zinc finger protein 587B (ZNF587B) from Homo sapiens (Human).